A 102-amino-acid polypeptide reads, in one-letter code: ATP-dependent Clp protease adapter protein ClpS (102 aa).

Belongs to the ClpS family. As to quaternary structure, binds to the N-terminal domain of the chaperone ClpA.

Involved in the modulation of the specificity of the ClpAP-mediated ATP-dependent protein degradation. This is ATP-dependent Clp protease adapter protein ClpS from Shewanella putrefaciens (strain CN-32 / ATCC BAA-453).